Consider the following 470-residue polypeptide: Probable citrate synthase, mitochondrial (470 aa).

Active-site residues include H297, H351, and D406.

Belongs to the citrate synthase family. As to quaternary structure, homodimer.

It localises to the mitochondrion matrix. It catalyses the reaction oxaloacetate + acetyl-CoA + H2O = citrate + CoA + H(+). It participates in carbohydrate metabolism; tricarboxylic acid cycle; isocitrate from oxaloacetate: step 1/2. The chain is Probable citrate synthase, mitochondrial from Leishmania infantum.